A 307-amino-acid polypeptide reads, in one-letter code: 4-hydroxy-3-methylbut-2-enyl diphosphate reductase (307 aa).

Cys13 provides a ligand contact to [4Fe-4S] cluster. (2E)-4-hydroxy-3-methylbut-2-enyl diphosphate contacts are provided by His42 and His75. Residues His42 and His75 each coordinate dimethylallyl diphosphate. Residues His42 and His75 each coordinate isopentenyl diphosphate. Cys97 is a binding site for [4Fe-4S] cluster. Residue His125 participates in (2E)-4-hydroxy-3-methylbut-2-enyl diphosphate binding. Dimethylallyl diphosphate is bound at residue His125. Position 125 (His125) interacts with isopentenyl diphosphate. Glu127 serves as the catalytic Proton donor. Thr165 lines the (2E)-4-hydroxy-3-methylbut-2-enyl diphosphate pocket. Cys195 lines the [4Fe-4S] cluster pocket. Residues Ser223, Ser224, Asn225, and Ser267 each coordinate (2E)-4-hydroxy-3-methylbut-2-enyl diphosphate. Residues Ser223, Ser224, Asn225, and Ser267 each coordinate dimethylallyl diphosphate. Residues Ser223, Ser224, Asn225, and Ser267 each contribute to the isopentenyl diphosphate site.

Belongs to the IspH family. It depends on [4Fe-4S] cluster as a cofactor.

It carries out the reaction isopentenyl diphosphate + 2 oxidized [2Fe-2S]-[ferredoxin] + H2O = (2E)-4-hydroxy-3-methylbut-2-enyl diphosphate + 2 reduced [2Fe-2S]-[ferredoxin] + 2 H(+). The enzyme catalyses dimethylallyl diphosphate + 2 oxidized [2Fe-2S]-[ferredoxin] + H2O = (2E)-4-hydroxy-3-methylbut-2-enyl diphosphate + 2 reduced [2Fe-2S]-[ferredoxin] + 2 H(+). The protein operates within isoprenoid biosynthesis; dimethylallyl diphosphate biosynthesis; dimethylallyl diphosphate from (2E)-4-hydroxy-3-methylbutenyl diphosphate: step 1/1. Its pathway is isoprenoid biosynthesis; isopentenyl diphosphate biosynthesis via DXP pathway; isopentenyl diphosphate from 1-deoxy-D-xylulose 5-phosphate: step 6/6. Functionally, catalyzes the conversion of 1-hydroxy-2-methyl-2-(E)-butenyl 4-diphosphate (HMBPP) into a mixture of isopentenyl diphosphate (IPP) and dimethylallyl diphosphate (DMAPP). Acts in the terminal step of the DOXP/MEP pathway for isoprenoid precursor biosynthesis. This chain is 4-hydroxy-3-methylbut-2-enyl diphosphate reductase, found in Chlamydia trachomatis serovar D (strain ATCC VR-885 / DSM 19411 / UW-3/Cx).